The following is a 209-amino-acid chain: Uracil phosphoribosyltransferase (209 aa).

Residues Arg-79, Arg-104, and 131 to 139 each bind 5-phospho-alpha-D-ribose 1-diphosphate; that span reads DPMLATGGS. Uracil contacts are provided by residues Ile-194 and 199–201; that span reads GDA. Asp-200 contributes to the 5-phospho-alpha-D-ribose 1-diphosphate binding site.

Belongs to the UPRTase family. Requires Mg(2+) as cofactor.

It carries out the reaction UMP + diphosphate = 5-phospho-alpha-D-ribose 1-diphosphate + uracil. It participates in pyrimidine metabolism; UMP biosynthesis via salvage pathway; UMP from uracil: step 1/1. Allosterically activated by GTP. Its function is as follows. Catalyzes the conversion of uracil and 5-phospho-alpha-D-ribose 1-diphosphate (PRPP) to UMP and diphosphate. In Oceanobacillus iheyensis (strain DSM 14371 / CIP 107618 / JCM 11309 / KCTC 3954 / HTE831), this protein is Uracil phosphoribosyltransferase.